A 1586-amino-acid polypeptide reads, in one-letter code: COP1-interactive protein 1 (1586 aa).

The 75-residue stretch at 10-84 (LKSFFEPHFD…RQYDDLTGEI (75 aa)) folds into the NAB domain. Residues 88 to 119 (VNGKGESSSSSSSDSDSDHSSKRKVKRNGNGK) form a disordered region. Coiled coils occupy residues 128–411 (TGAL…LKES), 437–1196 (ASEL…LKEE), 1225–1336 (LETL…TEAT), and 1372–1406 (MESL…SNQK). 5 LRR repeats span residues 173 to 187 (SEEI…TEKL), 188 to 210 (EDEK…VAGK), 216 to 239 (NQKL…GIKR), 261 to 285 (TSNL…MNSA), and 287 to 309 (EENK…GQTT). The segment covering 249-262 (DWKTTSDQLKDETS) has biased composition (basic and acidic residues). The segment at 249-286 (DWKTTSDQLKDETSNLKQQLEASEQRVSELTSGMNSAE) is disordered. The tract at residues 325 to 353 (KEKESEHSSLVELHKTHERESSSQVKELE) is disordered. LRR repeat units follow at residues 384 to 410 (IAEL…QLKE), 437 to 461 (ASEL…LKAA), 473 to 498 (VETM…KLKD), 560 to 586 (IAEL…QLKE), 613 to 637 (VSEL…LKDA), 649 to 674 (LEIM…ELKD), 768 to 792 (LSEL…LNAA), 824 to 850 (LAES…AHKR), 856 to 880 (VKEL…LNSS), 902 to 929 (ESTI…LFSL), 944 to 968 (LRGL…LKAA), 990 to 1014 (QIMV…ESKL), 1077 to 1101 (ISEL…LEDN), 1120 to 1144 (RAEL…SEEA), 1195 to 1220 (EEII…KIKG), 1247 to 1272 (VQMH…NLKN), 1372 to 1396 (MESL…ISNI), 1398 to 1417 (VKLR…LTEK), 1426 to 1448 (AKHL…TYRG), and 1450 to 1474 (IKEI…LTEK). Residues 430-456 (QRDSSTRASELEAQLESSKQQVSDLSA) form a disordered region. Over residues 444–455 (LESSKQQVSDLS) the composition is skewed to polar residues. The interval 965–985 (LKAAEEESRTMSTKISETSDE) is disordered. The stretch at 1496–1530 (VIERNHEKEKMNKEIEKKDEEIKKLGGKVREDEKE) forms a coiled coil.

In terms of assembly, interacts with COP1 coiled-coil region. Mainly expressed in photosynthetic and vascular tissues. Accumulates in both dark-grown and light-grown seedlings roots and shoots, leaves and flowers (at protein level).

It is found in the cell membrane. The protein resides in the cytoplasm. The protein localises to the cytoskeleton. Positive regulator of abscisic acid (ABA)-mediated signaling pathways involved in abiotic stress responses (e.g. osmotic stress) and leading to various plant adaptation (e.g. stomata closure). This Arabidopsis thaliana (Mouse-ear cress) protein is COP1-interactive protein 1.